A 214-amino-acid chain; its full sequence is Probable transaldolase (214 aa).

Lys83 functions as the Schiff-base intermediate with substrate in the catalytic mechanism.

The protein belongs to the transaldolase family. Type 3B subfamily.

The protein resides in the cytoplasm. The enzyme catalyses D-sedoheptulose 7-phosphate + D-glyceraldehyde 3-phosphate = D-erythrose 4-phosphate + beta-D-fructose 6-phosphate. It participates in carbohydrate degradation; pentose phosphate pathway; D-glyceraldehyde 3-phosphate and beta-D-fructose 6-phosphate from D-ribose 5-phosphate and D-xylulose 5-phosphate (non-oxidative stage): step 2/3. In terms of biological role, transaldolase is important for the balance of metabolites in the pentose-phosphate pathway. This is Probable transaldolase from Dictyoglomus turgidum (strain DSM 6724 / Z-1310).